Consider the following 423-residue polypeptide: Lysosomal acid phosphatase (423 aa).

The N-terminal stretch at 1–30 (MAGKRSGWSRAALLQLLLGVNLVVMPPTQA) is a signal peptide. At 31 to 380 (RSLRFVTLLY…QVASGPADTE (350 aa)) the chain is on the lumenal side. Catalysis depends on His-42, which acts as the Nucleophile. N-linked (GlcNAc...) asparagine glycosylation is found at Asn-92, Asn-133, Asn-167, Asn-177, Asn-191, and Asn-267. Intrachain disulfides connect Cys-159–Cys-370, Cys-212–Cys-310, and Cys-345–Cys-349. Asp-287 functions as the Proton donor in the catalytic mechanism. N-linked (GlcNAc...) asparagine glycans are attached at residues Asn-322 and Asn-331. Residues 381 to 401 (VIVALAVCGSILFLLIVLLLT) traverse the membrane as a helical segment. Residues 402–423 (VLFRMQAQPPGYRHVADGEDHA) are Cytoplasmic-facing.

It belongs to the histidine acid phosphatase family. Post-translationally, the membrane-bound form is converted to the soluble form by sequential proteolytic processing. First, the C-terminal cytoplasmic tail is removed. Cleavage by a lysosomal protease releases the soluble form in the lysosome lumen.

The protein localises to the lysosome membrane. It is found in the lysosome lumen. The enzyme catalyses a phosphate monoester + H2O = an alcohol + phosphate. The sequence is that of Lysosomal acid phosphatase (ACP2) from Pongo abelii (Sumatran orangutan).